The sequence spans 275 residues: NH(3)-dependent NAD(+) synthetase (275 aa).

50 to 57 contacts ATP; sequence GISGGVDS. Asp-56 is a Mg(2+) binding site. Arg-147 contacts deamido-NAD(+). An ATP-binding site is contributed by Thr-167. Glu-172 provides a ligand contact to Mg(2+). 2 residues coordinate deamido-NAD(+): Lys-180 and Asp-187. Residues Lys-196 and Thr-218 each coordinate ATP. 267–268 provides a ligand contact to deamido-NAD(+); sequence HK.

This sequence belongs to the NAD synthetase family. As to quaternary structure, homodimer.

The enzyme catalyses deamido-NAD(+) + NH4(+) + ATP = AMP + diphosphate + NAD(+) + H(+). The protein operates within cofactor biosynthesis; NAD(+) biosynthesis; NAD(+) from deamido-NAD(+) (ammonia route): step 1/1. Catalyzes the ATP-dependent amidation of deamido-NAD to form NAD. Uses ammonia as a nitrogen source. In Ectopseudomonas mendocina (strain ymp) (Pseudomonas mendocina), this protein is NH(3)-dependent NAD(+) synthetase.